A 455-amino-acid chain; its full sequence is Ribulose bisphosphate carboxylase large chain (455 aa).

K5 carries the post-translational modification N6,N6,N6-trimethyllysine. The substrate site is built by N114 and T164. K166 serves as the catalytic Proton acceptor. K168 lines the substrate pocket. Mg(2+)-binding residues include K192, D194, and E195. Residue K192 is modified to N6-carboxylysine. H285 (proton acceptor) is an active-site residue. Residues R286, H318, and S370 each contribute to the substrate site.

It belongs to the RuBisCO large chain family. Type I subfamily. In terms of assembly, heterohexadecamer of 8 large chains and 8 small chains; disulfide-linked. The disulfide link is formed within the large subunit homodimers. It depends on Mg(2+) as a cofactor. Post-translationally, the disulfide bond which can form in the large chain dimeric partners within the hexadecamer appears to be associated with oxidative stress and protein turnover.

The protein resides in the plastid. It is found in the chloroplast. The catalysed reaction is 2 (2R)-3-phosphoglycerate + 2 H(+) = D-ribulose 1,5-bisphosphate + CO2 + H2O. It catalyses the reaction D-ribulose 1,5-bisphosphate + O2 = 2-phosphoglycolate + (2R)-3-phosphoglycerate + 2 H(+). Its function is as follows. RuBisCO catalyzes two reactions: the carboxylation of D-ribulose 1,5-bisphosphate, the primary event in carbon dioxide fixation, as well as the oxidative fragmentation of the pentose substrate in the photorespiration process. Both reactions occur simultaneously and in competition at the same active site. The chain is Ribulose bisphosphate carboxylase large chain from Lupinus paraguariensis (Lupine).